We begin with the raw amino-acid sequence, 80 residues long: Conotoxin Bu3 (80 aa).

A signal peptide spans 1 to 22 (MKLMCVLIVSVLVLTACQLSTA). The propeptide occupies 23-51 (DDTRDKQKDRLVRLFRKKRDSSDSGLLPR). Intrachain disulfides connect cysteine 53-cysteine 69, cysteine 60-cysteine 72, and cysteine 68-cysteine 79.

It belongs to the conotoxin O1 superfamily. In terms of tissue distribution, expressed by the venom duct.

Its subcellular location is the secreted. The chain is Conotoxin Bu3 from Conus bullatus (Bubble cone).